A 390-amino-acid polypeptide reads, in one-letter code: Magnesium-protoporphyrin IX monomethyl ester [oxidative] cyclase (390 aa).

The protein belongs to the AcsF family. The cofactor is Fe cation.

The catalysed reaction is Mg-protoporphyrin IX 13-monomethyl ester + 3 NADPH + 3 O2 + 2 H(+) = 3,8-divinyl protochlorophyllide a + 3 NADP(+) + 5 H2O. The protein operates within porphyrin-containing compound metabolism; chlorophyll biosynthesis (light-independent). In terms of biological role, catalyzes the formation of the isocyclic ring in chlorophyll biosynthesis. Mediates the cyclase reaction, which results in the formation of divinylprotochlorophyllide (Pchlide) characteristic of all chlorophylls from magnesium-protoporphyrin IX 13-monomethyl ester (MgPMME). The protein is Magnesium-protoporphyrin IX monomethyl ester [oxidative] cyclase of Prochlorococcus marinus (strain AS9601).